A 532-amino-acid polypeptide reads, in one-letter code: Cytochrome P450 714B2 (532 aa).

Residues 1 to 2 lie on the Lumenal side of the membrane; the sequence is ME. A helical; Signal-anchor for type III membrane protein membrane pass occupies residues 3–23; that stretch reads VGMVVVVAAKVLVSLWCVGAC. The Cytoplasmic portion of the chain corresponds to 24–532; that stretch reads CLAAYLYRVV…LTRVQGAYRH (509 aa). Residue Cys-474 coordinates heme.

This sequence belongs to the cytochrome P450 family. It depends on heme as a cofactor. Highly expressed in shoot, spikelet and uppermost internode. Detected in roots, leaves and anthers.

It localises to the membrane. Functionally, catalyzes the 13-hydroxylation of gibberellins (GAs). Determines the ratio of GA4 and GA1. Converts GA12 into GA53. The sequence is that of Cytochrome P450 714B2 (CYP714B2) from Oryza sativa subsp. japonica (Rice).